The chain runs to 218 residues: Cytidylate kinase (218 aa).

Gly11 to Thr19 contributes to the ATP binding site.

Belongs to the cytidylate kinase family. Type 1 subfamily.

It is found in the cytoplasm. The catalysed reaction is CMP + ATP = CDP + ADP. The enzyme catalyses dCMP + ATP = dCDP + ADP. The polypeptide is Cytidylate kinase (Mycoplasmopsis synoviae (strain 53) (Mycoplasma synoviae)).